A 126-amino-acid chain; its full sequence is Small ribosomal subunit protein uS11 (126 aa).

The protein belongs to the universal ribosomal protein uS11 family. In terms of assembly, part of the 30S ribosomal subunit.

Its function is as follows. Located on the platform of the 30S subunit. This chain is Small ribosomal subunit protein uS11, found in Methanosarcina acetivorans (strain ATCC 35395 / DSM 2834 / JCM 12185 / C2A).